The sequence spans 78 residues: Large ribosomal subunit protein bL31 (78 aa).

This sequence belongs to the bacterial ribosomal protein bL31 family. Type A subfamily. As to quaternary structure, part of the 50S ribosomal subunit.

Binds the 23S rRNA. This is Large ribosomal subunit protein bL31 from Rickettsia prowazekii (strain Madrid E).